Reading from the N-terminus, the 300-residue chain is F-box/LRR-repeat protein 15 (300 aa).

M1 carries the N-acetylmethionine modification. The F-box domain occupies L19 to D66. Residues N113–R269 are interaction with SMURF1. LRR repeat units follow at residues R141–A162, A167–A188, G194–A215, Q220–A241, and A246–R267.

Belongs to the FBXL15 family. Part of the SCF (SKP1-CUL1-F-box) E3 ubiquitin-protein ligase complex SCF(FBXL15) composed of CUL1, SKP1, RBX1 and FBXL15.

It localises to the cytoplasm. Its pathway is protein modification; protein ubiquitination. Substrate recognition component of a SCF (SKP1-CUL1-F-box protein) E3 ubiquitin-protein ligase complex which mediates the ubiquitination and subsequent proteasomal degradation of SMURF1, thereby acting as a positive regulator of the BMP signaling pathway. Required for dorsal/ventral pattern formation. Also mediates ubiquitination of SMURF2 and WWP2. Required for bone mass maintenance. The chain is F-box/LRR-repeat protein 15 (Fbxl15) from Rattus norvegicus (Rat).